The primary structure comprises 414 residues: Isocitrate dehydrogenase [NADP] cytoplasmic (414 aa).

Position 2 is an N-acetylserine (Ser2). Phosphotyrosine is present on Tyr42. Residue 75–77 (TIT) coordinates NADP(+). Thr77 lines the substrate pocket. Lys81 is modified (N6-acetyllysine). Arg82 is a binding site for NADP(+). Residues 94 to 100 (SPNGTIR) and Arg109 contribute to the substrate site. The residue at position 126 (Lys126) is an N6-succinyllysine. 2 residues coordinate substrate: Arg132 and Lys212. Lys224 and Lys233 each carry N6-acetyllysine. Asp252 is a Mn(2+) binding site. Lys260 is an NADP(+) binding site. 2 residues coordinate Mn(2+): Asp275 and Asp279. 310–315 (GTVTRH) contributes to the NADP(+) binding site. N6-acetyllysine is present on Lys321. Residue Asn328 coordinates NADP(+). A Phosphoserine modification is found at Ser389. Residue Lys400 is modified to N6-succinyllysine.

The protein belongs to the isocitrate and isopropylmalate dehydrogenases family. Homodimer. The cofactor is Mg(2+). Mn(2+) is required as a cofactor. In terms of processing, acetylation at Lys-374 dramatically reduces catalytic activity. As to expression, expressed preferentially in corneal epithelium. Constitute approximately 13% of the total soluble bovine corneal epithelial proteins.

Its subcellular location is the cytoplasm. The protein resides in the cytosol. It catalyses the reaction D-threo-isocitrate + NADP(+) = 2-oxoglutarate + CO2 + NADPH. Its function is as follows. Catalyzes the NADP(+)-dependent oxidative decarboxylation of isocitrate (D-threo-isocitrate) to 2-ketoglutarate (2-oxoglutarate), which is required by other enzymes such as the phytanoyl-CoA dioxygenase. Plays a critical role in the generation of NADPH, an important cofactor in many biosynthesis pathways. May act as a corneal epithelial crystallin and may be involved in maintaining corneal epithelial transparency. The sequence is that of Isocitrate dehydrogenase [NADP] cytoplasmic (IDH1) from Bos taurus (Bovine).